A 288-amino-acid polypeptide reads, in one-letter code: Energy-coupling factor transporter ATP-binding protein EcfA2 (288 aa).

One can recognise an ABC transporter domain in the interval 3-245 (IKIENLTHVY…VDTLESVGLA (243 aa)). 40–47 (GHTGSGKS) is an ATP binding site.

The protein belongs to the ABC transporter superfamily. Energy-coupling factor EcfA family. In terms of assembly, forms a stable energy-coupling factor (ECF) transporter complex composed of 2 membrane-embedded substrate-binding proteins (S component), 2 ATP-binding proteins (A component) and 2 transmembrane proteins (T component).

Its subcellular location is the cell membrane. Its function is as follows. ATP-binding (A) component of a common energy-coupling factor (ECF) ABC-transporter complex. Unlike classic ABC transporters this ECF transporter provides the energy necessary to transport a number of different substrates. This is Energy-coupling factor transporter ATP-binding protein EcfA2 from Clostridium tetani (strain Massachusetts / E88).